The sequence spans 486 residues: Glutamyl-tRNA(Gln) amidotransferase subunit A (486 aa).

Residues Lys77 and Ser152 each act as charge relay system in the active site. Residue Ser176 is the Acyl-ester intermediate of the active site.

Belongs to the amidase family. GatA subfamily. As to quaternary structure, heterotrimer of A, B and C subunits.

The enzyme catalyses L-glutamyl-tRNA(Gln) + L-glutamine + ATP + H2O = L-glutaminyl-tRNA(Gln) + L-glutamate + ADP + phosphate + H(+). In terms of biological role, allows the formation of correctly charged Gln-tRNA(Gln) through the transamidation of misacylated Glu-tRNA(Gln) in organisms which lack glutaminyl-tRNA synthetase. The reaction takes place in the presence of glutamine and ATP through an activated gamma-phospho-Glu-tRNA(Gln). The polypeptide is Glutamyl-tRNA(Gln) amidotransferase subunit A (Pediococcus pentosaceus (strain ATCC 25745 / CCUG 21536 / LMG 10740 / 183-1w)).